Consider the following 450-residue polypeptide: Oxygen-independent coproporphyrinogen III oxidase (450 aa).

Residues 45-282 (IPAGGSISLY…RTLILWDGYQ (238 aa)) enclose the Radical SAM core domain. S-adenosyl-L-methionine is bound at residue Y54. Residues C60 and C64 each coordinate [4Fe-4S] cluster. S-adenosyl-L-methionine is bound at residue F66. C67 provides a ligand contact to [4Fe-4S] cluster. S-adenosyl-L-methionine contacts are provided by residues G111, 112-113 (GT), E144, Q171, R183, D208, A242, and I328.

Belongs to the anaerobic coproporphyrinogen-III oxidase family. In terms of assembly, monomer. It depends on [4Fe-4S] cluster as a cofactor.

Its subcellular location is the cytoplasm. The enzyme catalyses coproporphyrinogen III + 2 S-adenosyl-L-methionine = protoporphyrinogen IX + 2 5'-deoxyadenosine + 2 L-methionine + 2 CO2. It functions in the pathway porphyrin-containing compound metabolism; protoporphyrin-IX biosynthesis; protoporphyrinogen-IX from coproporphyrinogen-III (AdoMet route): step 1/1. Its function is as follows. Involved in the heme and chlorophyll biosynthesis. Catalyzes the anaerobic oxidative decarboxylation of propionate groups of rings A and B of coproporphyrinogen III to yield the vinyl groups in protoporphyrinogen IX. The chain is Oxygen-independent coproporphyrinogen III oxidase (hemZ) from Cereibacter sphaeroides (strain ATCC 17023 / DSM 158 / JCM 6121 / CCUG 31486 / LMG 2827 / NBRC 12203 / NCIMB 8253 / ATH 2.4.1.) (Rhodobacter sphaeroides).